A 465-amino-acid polypeptide reads, in one-letter code: A-type ATP synthase subunit B (465 aa).

This sequence belongs to the ATPase alpha/beta chains family. The A-type ATPase is composed of subunits A(3), B(3), C, D, E(1 or 2), F, H(2), I and proteolipid K(x).

It is found in the cell membrane. Its function is as follows. Component of the A-type ATP synthase that produces ATP from ADP in the presence of a proton gradient across the membrane. The B chain is a regulatory subunit. The chain is A-type ATP synthase subunit B from Methanocaldococcus jannaschii (strain ATCC 43067 / DSM 2661 / JAL-1 / JCM 10045 / NBRC 100440) (Methanococcus jannaschii).